Reading from the N-terminus, the 282-residue chain is Bis(5'-nucleosyl)-tetraphosphatase, symmetrical (282 aa).

The protein belongs to the Ap4A hydrolase family.

It carries out the reaction P(1),P(4)-bis(5'-adenosyl) tetraphosphate + H2O = 2 ADP + 2 H(+). Hydrolyzes diadenosine 5',5'''-P1,P4-tetraphosphate to yield ADP. This chain is Bis(5'-nucleosyl)-tetraphosphatase, symmetrical, found in Enterobacter sp. (strain 638).